A 469-amino-acid polypeptide reads, in one-letter code: UDP-N-acetylmuramate--L-alanine ligase (469 aa).

Position 112–118 (Gly112–Thr118) interacts with ATP.

The protein belongs to the MurCDEF family.

It localises to the cytoplasm. It carries out the reaction UDP-N-acetyl-alpha-D-muramate + L-alanine + ATP = UDP-N-acetyl-alpha-D-muramoyl-L-alanine + ADP + phosphate + H(+). It participates in cell wall biogenesis; peptidoglycan biosynthesis. Cell wall formation. The chain is UDP-N-acetylmuramate--L-alanine ligase from Leptothrix cholodnii (strain ATCC 51168 / LMG 8142 / SP-6) (Leptothrix discophora (strain SP-6)).